A 294-amino-acid chain; its full sequence is 33 kDa chaperonin (294 aa).

Disulfide bonds link cysteine 238–cysteine 240 and cysteine 271–cysteine 274.

Belongs to the HSP33 family. Post-translationally, under oxidizing conditions two disulfide bonds are formed involving the reactive cysteines. Under reducing conditions zinc is bound to the reactive cysteines and the protein is inactive.

The protein resides in the cytoplasm. In terms of biological role, redox regulated molecular chaperone. Protects both thermally unfolding and oxidatively damaged proteins from irreversible aggregation. Plays an important role in the bacterial defense system toward oxidative stress. In Staphylococcus haemolyticus (strain JCSC1435), this protein is 33 kDa chaperonin.